The following is a 358-amino-acid chain: Dihydroorotate dehydrogenase (quinone) (358 aa).

Residues 61–65 and Gly85 each bind FMN; that span reads AGFDK. Lys65 lines the substrate pocket. Residue 110–114 participates in substrate binding; it reads NRFGL. 2 residues coordinate FMN: Asn139 and Asn170. A substrate-binding site is contributed by Asn170. Residue Ser173 is the Nucleophile of the active site. Residue Asn175 coordinates substrate. FMN-binding residues include Lys211 and Ser239. 240 to 241 is a substrate binding site; sequence NT. FMN-binding positions include Gly263, Gly292, and 313–314; that span reads YS.

Belongs to the dihydroorotate dehydrogenase family. Type 2 subfamily. As to quaternary structure, monomer. Requires FMN as cofactor.

The protein resides in the cell membrane. The enzyme catalyses (S)-dihydroorotate + a quinone = orotate + a quinol. It participates in pyrimidine metabolism; UMP biosynthesis via de novo pathway; orotate from (S)-dihydroorotate (quinone route): step 1/1. In terms of biological role, catalyzes the conversion of dihydroorotate to orotate with quinone as electron acceptor. This Methylorubrum extorquens (strain CM4 / NCIMB 13688) (Methylobacterium extorquens) protein is Dihydroorotate dehydrogenase (quinone).